Consider the following 424-residue polypeptide: Serine hydroxymethyltransferase (424 aa).

Residues Leu118 and 122 to 124 (GHL) contribute to the (6S)-5,6,7,8-tetrahydrofolate site. Lys227 bears the N6-(pyridoxal phosphate)lysine mark. (6S)-5,6,7,8-tetrahydrofolate contacts are provided by residues Glu243 and 351 to 353 (SPF).

It belongs to the SHMT family. As to quaternary structure, homodimer. Requires pyridoxal 5'-phosphate as cofactor.

It is found in the cytoplasm. It catalyses the reaction (6R)-5,10-methylene-5,6,7,8-tetrahydrofolate + glycine + H2O = (6S)-5,6,7,8-tetrahydrofolate + L-serine. It functions in the pathway one-carbon metabolism; tetrahydrofolate interconversion. The protein operates within amino-acid biosynthesis; glycine biosynthesis; glycine from L-serine: step 1/1. Its function is as follows. Catalyzes the reversible interconversion of serine and glycine with tetrahydrofolate (THF) serving as the one-carbon carrier. This reaction serves as the major source of one-carbon groups required for the biosynthesis of purines, thymidylate, methionine, and other important biomolecules. Also exhibits THF-independent aldolase activity toward beta-hydroxyamino acids, producing glycine and aldehydes, via a retro-aldol mechanism. The protein is Serine hydroxymethyltransferase of Thermosipho africanus (strain TCF52B).